The sequence spans 278 residues: Undecaprenyl-diphosphatase 1 (278 aa).

The next 7 helical transmembrane spans lie at 1-21 (MFFG…TEFL), 43-63 (AFTT…VVLL), 83-103 (IWAT…IGFL), 112-132 (LMNW…FIFI), 192-212 (FSFF…IGSY), 224-244 (IVIL…VIKW), and 257-277 (FGWY…IGII).

It belongs to the UppP family.

The protein resides in the cell membrane. It catalyses the reaction di-trans,octa-cis-undecaprenyl diphosphate + H2O = di-trans,octa-cis-undecaprenyl phosphate + phosphate + H(+). Catalyzes the dephosphorylation of undecaprenyl diphosphate (UPP). Confers resistance to bacitracin. This is Undecaprenyl-diphosphatase 1 from Oenococcus oeni (strain ATCC BAA-331 / PSU-1).